We begin with the raw amino-acid sequence, 128 residues long: Large ribosomal subunit protein mL51 (128 aa).

Residues 1–31 (MAGSVPWAASRRLWGWVPSACRSFSLGVPRL) constitute a mitochondrion transit peptide.

The protein belongs to the mitochondrion-specific ribosomal protein mL51 family. In terms of assembly, component of the mitochondrial ribosome large subunit (39S) which comprises a 16S rRNA and about 50 distinct proteins. Interacts with OXA1L.

Its subcellular location is the mitochondrion. The sequence is that of Large ribosomal subunit protein mL51 (Mrpl51) from Mus musculus (Mouse).